Consider the following 443-residue polypeptide: Xaa-Pro dipeptidase (443 aa).

5 residues coordinate Mn(2+): D246, D257, H339, E384, and E423.

The protein belongs to the peptidase M24B family. Bacterial-type prolidase subfamily. Requires Mn(2+) as cofactor.

The enzyme catalyses Xaa-L-Pro dipeptide + H2O = an L-alpha-amino acid + L-proline. Its function is as follows. Splits dipeptides with a prolyl residue in the C-terminal position. The protein is Xaa-Pro dipeptidase of Salmonella paratyphi B (strain ATCC BAA-1250 / SPB7).